A 553-amino-acid chain; its full sequence is Fusion glycoprotein F0 (553 aa).

The signal sequence occupies residues 1–31; that stretch reads MASRSSTRIPAPLMLTIWIALALGCVRLTSS. The Extracellular portion of the chain corresponds to 32–500; that stretch reads LDGRPLAAAG…VNVRLTNTSA (469 aa). Cystine bridges form between Cys76-Cys199, Cys338-Cys347, Cys362-Cys370, Cys394-Cys399, and Cys401-Cys424. Asn85 carries an N-linked (GlcNAc...) asparagine; by host glycan. A fusion peptide region spans residues 117-141; the sequence is FIGAIIGSVALGVATAAQITAASAL. The stretch at 142-170 forms a coiled coil; it reads IQANQNAANILRLKESIAATNEAVHEVTD. Asn191 and Asn192 each carry an N-linked (GlcNAc...) asparagine; by host glycan. The N-linked (GlcNAc...) asparagine; by host glycan is linked to Asn366. N-linked (GlcNAc...) asparagine; by host glycosylation is found at Asn447 and Asn471. A coiled-coil region spans residues 466–491; the sequence is ELGNANNSISNALNKLEESNSKLDKV. The chain crosses the membrane as a helical span at residues 501 to 521; the sequence is LITYIVLTVISLVCGILSLVL. The Cytoplasmic segment spans residues 522 to 553; the sequence is ACYLMHKQKAQQKTLLWLGNNTLDQMRATTKA. Cys523 carries the S-palmitoyl cysteine; by host lipid modification.

Belongs to the paramyxoviruses fusion glycoprotein family. In terms of assembly, homotrimer of disulfide-linked F1-F2. Post-translationally, the inactive precursor F0 is glycosylated and proteolytically cleaved into F1 and F2 to be functionally active. The cleavage is mediated by cellular proteases during the transport and maturation of the polypeptide.

It localises to the virion membrane. The protein localises to the host cell membrane. Its function is as follows. Class I viral fusion protein. Under the current model, the protein has at least 3 conformational states: pre-fusion native state, pre-hairpin intermediate state, and post-fusion hairpin state. During viral and plasma cell membrane fusion, the heptad repeat (HR) regions assume a trimer-of-hairpins structure, positioning the fusion peptide in close proximity to the C-terminal region of the ectodomain. The formation of this structure appears to drive apposition and subsequent fusion of viral and plasma cell membranes. Directs fusion of viral and cellular membranes leading to delivery of the nucleocapsid into the cytoplasm. This fusion is pH independent and occurs directly at the outer cell membrane. The trimer of F1-F2 (F protein) probably interacts with HN at the virion surface. Upon HN binding to its cellular receptor, the hydrophobic fusion peptide is unmasked and interacts with the cellular membrane, inducing the fusion between cell and virion membranes. Later in infection, F proteins expressed at the plasma membrane of infected cells could mediate fusion with adjacent cells to form syncytia, a cytopathic effect that could lead to tissue necrosis. This Gallus gallus (Chicken) protein is Fusion glycoprotein F0 (F).